The following is a 619-amino-acid chain: Chaperone protein HscA homolog (619 aa).

Belongs to the heat shock protein 70 family.

In terms of biological role, chaperone involved in the maturation of iron-sulfur cluster-containing proteins. Has a low intrinsic ATPase activity which is markedly stimulated by HscB. The protein is Chaperone protein HscA homolog of Haemophilus influenzae (strain 86-028NP).